The primary structure comprises 273 residues: Serine acetyltransferase (273 aa).

Belongs to the transferase hexapeptide repeat family. Homohexamer. Dimer of a homotrimer.

It is found in the cytoplasm. The catalysed reaction is L-serine + acetyl-CoA = O-acetyl-L-serine + CoA. It participates in amino-acid biosynthesis; L-cysteine biosynthesis; L-cysteine from L-serine: step 1/2. The sequence is that of Serine acetyltransferase (cysE) from Shigella flexneri.